The chain runs to 459 residues: Putrescine aminotransferase (459 aa).

Pyridoxal 5'-phosphate-binding positions include 150 to 151 and Gln-274; that span reads GT. Lys-300 carries the post-translational modification N6-(pyridoxal phosphate)lysine. Pyridoxal 5'-phosphate is bound at residue Thr-332.

It belongs to the class-III pyridoxal-phosphate-dependent aminotransferase family. Putrescine aminotransferase subfamily. Pyridoxal 5'-phosphate is required as a cofactor.

It catalyses the reaction an alkane-alpha,omega-diamine + 2-oxoglutarate = an omega-aminoaldehyde + L-glutamate. The enzyme catalyses putrescine + 2-oxoglutarate = 1-pyrroline + L-glutamate + H2O. It carries out the reaction cadaverine + 2-oxoglutarate = 5-aminopentanal + L-glutamate. The protein operates within amine and polyamine degradation; putrescine degradation; 4-aminobutanal from putrescine (transaminase route): step 1/1. Functionally, catalyzes the aminotransferase reaction from putrescine to 2-oxoglutarate, leading to glutamate and 4-aminobutanal, which spontaneously cyclizes to form 1-pyrroline. This is the first step in one of two pathways for putrescine degradation, where putrescine is converted into 4-aminobutanoate (gamma-aminobutyrate or GABA) via 4-aminobutanal. Also functions as a cadaverine transaminase in a a L-lysine degradation pathway to succinate that proceeds via cadaverine, glutarate and L-2-hydroxyglutarate. This is Putrescine aminotransferase from Salmonella paratyphi B (strain ATCC BAA-1250 / SPB7).